Consider the following 95-residue polypeptide: Histone-like DNA-binding protein (95 aa).

Belongs to the bacterial histone-like protein family.

The sequence is that of Histone-like DNA-binding protein from Rickettsia rickettsii.